A 686-amino-acid polypeptide reads, in one-letter code: Protein arginine N-methyltransferase 7 (686 aa).

SAM-dependent MTase PRMT-type domains follow at residues 5 to 352 (SDDY…FSWW) and 357 to 686 (DLSL…FKFD).

Belongs to the class I-like SAM-binding methyltransferase superfamily. Protein arginine N-methyltransferase family. PRMT7 subfamily.

Essential arginine methyltransferase that can both catalyze the formation of omega-N monomethylarginine (MMA) and symmetrical dimethylarginine (sDMA). Specifically mediates the symmetrical dimethylation of arginine residues in the small nuclear ribonucleoproteins SmD1 and SmD3. The chain is Protein arginine N-methyltransferase 7 (Art7) from Aedes aegypti (Yellowfever mosquito).